We begin with the raw amino-acid sequence, 1218 residues long: Mgp-operon protein 3 (1218 aa).

Positions Met1–Ala25 are cleaved as a signal peptide. Disordered regions lie at residues Gln109–Asn129, His213–Leu245, Glu262–Ser353, and Gln411–Thr440. Residues Asn116 to Asn129 show a composition bias toward low complexity. Residues Gly217–Leu231 show a composition bias toward polar residues. Residues Asp265 to Ala286 show a composition bias toward basic and acidic residues. Residues Ala301–Asn342 are compositionally biased toward low complexity. Positions Gln411–Gly428 are enriched in polar residues. The helical transmembrane segment at Val1121 to Pro1141 threads the bilayer. Over residues Asn1192 to Ala1204 the composition is skewed to low complexity. The tract at residues Asn1192–Ala1218 is disordered. The segment covering Pro1205–Ala1218 has biased composition (pro residues).

It is found in the cell membrane. This is Mgp-operon protein 3 from Mycoplasma pneumoniae (strain ATCC 29342 / M129 / Subtype 1) (Mycoplasmoides pneumoniae).